The following is a 178-amino-acid chain: UPF0228 protein MA_4223 (178 aa).

The protein belongs to the UPF0228 family.

In Methanosarcina acetivorans (strain ATCC 35395 / DSM 2834 / JCM 12185 / C2A), this protein is UPF0228 protein MA_4223.